The following is a 359-amino-acid chain: 5-formaminoimidazole-4-carboxamide-1-(beta)-D-ribofuranosyl 5'-monophosphate synthetase (359 aa).

Positions 28 and 95 each coordinate 5-amino-1-(5-phospho-beta-D-ribosyl)imidazole-4-carboxamide. Positions 115 to 346 constitute an ATP-grasp domain; it reads ELMIWETDRD…MGRRIAREIK (232 aa). Residues 144–206 and Glu-228 each bind ATP; that span reads PEEI…ANIY. Position 256 (Asn-256) interacts with 5-amino-1-(5-phospho-beta-D-ribosyl)imidazole-4-carboxamide. 2 residues coordinate Mg(2+): Glu-295 and Glu-308.

Belongs to the phosphohexose mutase family. Mg(2+) is required as a cofactor. Mn(2+) serves as cofactor.

It carries out the reaction 5-amino-1-(5-phospho-beta-D-ribosyl)imidazole-4-carboxamide + formate + ATP = 5-formamido-1-(5-phospho-D-ribosyl)imidazole-4-carboxamide + ADP + phosphate. It participates in purine metabolism; IMP biosynthesis via de novo pathway; 5-formamido-1-(5-phospho-D-ribosyl)imidazole-4-carboxamide from 5-amino-1-(5-phospho-D-ribosyl)imidazole-4-carboxamide (formate route): step 1/1. Its function is as follows. Catalyzes the ATP- and formate-dependent formylation of 5-aminoimidazole-4-carboxamide-1-beta-d-ribofuranosyl 5'-monophosphate (AICAR) to 5-formaminoimidazole-4-carboxamide-1-beta-d-ribofuranosyl 5'-monophosphate (FAICAR) in the absence of folates. The protein is 5-formaminoimidazole-4-carboxamide-1-(beta)-D-ribofuranosyl 5'-monophosphate synthetase of Archaeoglobus fulgidus (strain ATCC 49558 / DSM 4304 / JCM 9628 / NBRC 100126 / VC-16).